The sequence spans 335 residues: MATKVVLDFEKPLVELEAKLGEMRHCLRSSSREQAPNEAEALQNEIGTLEKKVEALRQSIYKNLTRWQKVQLARHPERPYTLDYIYMITCDFVELAGDRHFSDDKAIVGGFARIEDRVSGFSQPVMVIGHQKGRDTKSNLYRNFGMAQPEGYRKALRLMKLAEKFRKPIITLIDTPGAFPGIEAEERGQAEAIARNLYEMAKLTVPVICVIIGEGASGGAIGLGVGDRILMAENSWYSVISPESCSSILWRSWNYKEQAAEALQLTAPDLLSQGIIDRIVPEPMGGAHTAPEAMAGTLKGILIEELSALLPLSSEELVNSRIEKFSSMGVWNEEG.

One can recognise a CoA carboxyltransferase C-terminal domain in the interval 48–308; it reads TLEKKVEALR…KGILIEELSA (261 aa).

Belongs to the AccA family. Acetyl-CoA carboxylase is a heterohexamer composed of biotin carboxyl carrier protein (AccB), biotin carboxylase (AccC) and two subunits each of ACCase subunit alpha (AccA) and ACCase subunit beta (AccD).

Its subcellular location is the cytoplasm. It carries out the reaction N(6)-carboxybiotinyl-L-lysyl-[protein] + acetyl-CoA = N(6)-biotinyl-L-lysyl-[protein] + malonyl-CoA. It participates in lipid metabolism; malonyl-CoA biosynthesis; malonyl-CoA from acetyl-CoA: step 1/1. Its function is as follows. Component of the acetyl coenzyme A carboxylase (ACC) complex. First, biotin carboxylase catalyzes the carboxylation of biotin on its carrier protein (BCCP) and then the CO(2) group is transferred by the carboxyltransferase to acetyl-CoA to form malonyl-CoA. The polypeptide is Acetyl-coenzyme A carboxylase carboxyl transferase subunit alpha (Chlorobium phaeovibrioides (strain DSM 265 / 1930) (Prosthecochloris vibrioformis (strain DSM 265))).